The primary structure comprises 153 residues: Transcriptional regulator MraZ (153 aa).

SpoVT-AbrB domains follow at residues 7–61 (KEKH…LPDV) and 90–133 (LEMV…EPGR).

This sequence belongs to the MraZ family. In terms of assembly, forms oligomers.

The protein resides in the cytoplasm. It is found in the nucleoid. This chain is Transcriptional regulator MraZ, found in Chlorobium luteolum (strain DSM 273 / BCRC 81028 / 2530) (Pelodictyon luteolum).